A 74-amino-acid polypeptide reads, in one-letter code: MIQVAKIIGTGLATTGLIGAGIGIGVVFGSLIIGVSRNPSLKSQLFAYAILGFAFSEATGLFALMMAFLLLYVA.

2 helical membrane passes run 16 to 36 and 50 to 70; these read GLIG…IGVS and ILGF…AFLL.

The protein belongs to the ATPase C chain family. As to quaternary structure, F-type ATPases have 2 components, CF(1) - the catalytic core - and CF(0) - the membrane proton channel. CF(1) has five subunits: alpha(3), beta(3), gamma(1), delta(1), epsilon(1). CF(0) has three main subunits: a, b and c.

The protein localises to the mitochondrion inner membrane. Mitochondrial membrane ATP synthase (F(1)F(0) ATP synthase or Complex V) produces ATP from ADP in the presence of a proton gradient across the membrane which is generated by electron transport complexes of the respiratory chain. F-type ATPases consist of two structural domains, F(1) - containing the extramembraneous catalytic core and F(0) - containing the membrane proton channel, linked together by a central stalk and a peripheral stalk. During catalysis, ATP synthesis in the catalytic domain of F(1) is coupled via a rotary mechanism of the central stalk subunits to proton translocation. Part of the complex F(0) domain. A homomeric c-ring of probably 10 subunits is part of the complex rotary element. The polypeptide is ATP synthase subunit 9, mitochondrial (atp-9) (Neurospora crassa (strain ATCC 24698 / 74-OR23-1A / CBS 708.71 / DSM 1257 / FGSC 987)).